The chain runs to 478 residues: Trigger factor (478 aa).

The PPIase FKBP-type domain occupies 162 to 243 (GDFVSIDLSA…VKSIKERELP (82 aa)). Residues 424 to 478 (KDTDGNDIDTTEFFGPSGGAQAEAEGADEADADSDADSDTEADSDTEADEADEAK) form a disordered region. Positions 448–478 (EGADEADADSDADSDTEADSDTEADEADEAK) are enriched in acidic residues.

The protein belongs to the FKBP-type PPIase family. Tig subfamily.

It is found in the cytoplasm. The catalysed reaction is [protein]-peptidylproline (omega=180) = [protein]-peptidylproline (omega=0). Functionally, involved in protein export. Acts as a chaperone by maintaining the newly synthesized protein in an open conformation. Functions as a peptidyl-prolyl cis-trans isomerase. The protein is Trigger factor of Mycobacterium sp. (strain KMS).